A 227-amino-acid chain; its full sequence is Isopentenyl-diphosphate Delta-isomerase 1 (227 aa).

Residue lysine 36 participates in substrate binding. Histidine 40 and histidine 51 together coordinate Mg(2+). The 151-residue stretch at leucine 49–isoleucine 199 folds into the Nudix hydrolase domain. The substrate site is built by arginine 70 and lysine 74. Cysteine 86 functions as the Proton acceptor in the catalytic mechanism. Substrate is bound at residue serine 87. The Mg(2+) site is built by glutamate 146 and glutamate 148. Glutamate 148 is a catalytic residue. Lysine 176 carries the N6-acetyllysine modification.

This sequence belongs to the IPP isomerase type 1 family. In terms of assembly, monomer. Requires Mg(2+) as cofactor.

The protein resides in the peroxisome. It carries out the reaction isopentenyl diphosphate = dimethylallyl diphosphate. Its pathway is isoprenoid biosynthesis; dimethylallyl diphosphate biosynthesis; dimethylallyl diphosphate from isopentenyl diphosphate: step 1/1. Functionally, catalyzes the 1,3-allylic rearrangement of the homoallylic substrate isopentenyl (IPP) to its highly electrophilic allylic isomer, dimethylallyl diphosphate (DMAPP). The sequence is that of Isopentenyl-diphosphate Delta-isomerase 1 (IDI1) from Bos taurus (Bovine).